Here is a 128-residue protein sequence, read N- to C-terminus: Sulfurtransferase TusD (128 aa).

Catalysis depends on Cys-78, which acts as the Cysteine persulfide intermediate.

The protein belongs to the DsrE/TusD family. In terms of assembly, heterohexamer, formed by a dimer of trimers. The hexameric TusBCD complex contains 2 copies each of TusB, TusC and TusD. The TusBCD complex interacts with TusE.

It is found in the cytoplasm. Functionally, part of a sulfur-relay system required for 2-thiolation of 5-methylaminomethyl-2-thiouridine (mnm(5)s(2)U) at tRNA wobble positions. Accepts sulfur from TusA and transfers it in turn to TusE. The chain is Sulfurtransferase TusD from Klebsiella pneumoniae subsp. pneumoniae (strain ATCC 700721 / MGH 78578).